Here is a 396-residue protein sequence, read N- to C-terminus: Stearoyl-[acyl-carrier-protein] 9-desaturase 2, chloroplastic (396 aa).

A chloroplast-targeting transit peptide spans 1–32 (MALRPNDVTLRLTPPLAAAARRNRRAAAGGVR). 6 residues coordinate Fe cation: E138, E176, H179, E229, E262, and H265.

Belongs to the fatty acid desaturase type 2 family. As to quaternary structure, homodimer. It depends on Fe(2+) as a cofactor.

The protein resides in the plastid. The protein localises to the chloroplast. The enzyme catalyses octadecanoyl-[ACP] + 2 reduced [2Fe-2S]-[ferredoxin] + O2 + 2 H(+) = (9Z)-octadecenoyl-[ACP] + 2 oxidized [2Fe-2S]-[ferredoxin] + 2 H2O. It participates in lipid metabolism; fatty acid metabolism. In terms of biological role, converts stearoyl-ACP to oleoyl-ACP by introduction of a cis double bond between carbons 9 and 10 of the acyl chain. Required for the repression of the salicylic acid (SA) signaling pathway. In Oryza sativa subsp. indica (Rice), this protein is Stearoyl-[acyl-carrier-protein] 9-desaturase 2, chloroplastic (SSI2).